The sequence spans 115 residues: NADH-ubiquinone oxidoreductase chain 3 (115 aa).

A run of 3 helical transmembrane segments spans residues 4–24 (FIVM…AFWL), 55–75 (FFLV…LLPL), and 86–106 (ITML…AYEW).

Belongs to the complex I subunit 3 family. Core subunit of respiratory chain NADH dehydrogenase (Complex I) which is composed of 45 different subunits. Interacts with TMEM186. Interacts with TMEM242.

The protein resides in the mitochondrion inner membrane. The enzyme catalyses a ubiquinone + NADH + 5 H(+)(in) = a ubiquinol + NAD(+) + 4 H(+)(out). Functionally, core subunit of the mitochondrial membrane respiratory chain NADH dehydrogenase (Complex I) which catalyzes electron transfer from NADH through the respiratory chain, using ubiquinone as an electron acceptor. Essential for the catalytic activity of complex I. This is NADH-ubiquinone oxidoreductase chain 3 from Reithrodontomys fulvescens (Fulvous harvest mouse).